Consider the following 171-residue polypeptide: Adenine phosphoribosyltransferase (171 aa).

It belongs to the purine/pyrimidine phosphoribosyltransferase family. In terms of assembly, homodimer.

It localises to the cytoplasm. It catalyses the reaction AMP + diphosphate = 5-phospho-alpha-D-ribose 1-diphosphate + adenine. The protein operates within purine metabolism; AMP biosynthesis via salvage pathway; AMP from adenine: step 1/1. In terms of biological role, catalyzes a salvage reaction resulting in the formation of AMP, that is energically less costly than de novo synthesis. This Geobacter metallireducens (strain ATCC 53774 / DSM 7210 / GS-15) protein is Adenine phosphoribosyltransferase.